A 442-amino-acid polypeptide reads, in one-letter code: Lipoyl synthase, apicoplast (442 aa).

Positions 1–25 (MHVLTPSLYIYAFFIVCVRLKCGRS) are cleaved as a signal peptide. Positions 92 to 154 (LLRSESATDE…EKKPDWFHVP (63 aa)) are disordered. The span at 109–127 (LKEKLKESPANWGKDKQEE) shows a compositional bias: basic and acidic residues. Cys177, Cys182, Cys188, Cys203, Cys207, Cys210, and Ser418 together coordinate [4Fe-4S] cluster. The Radical SAM core domain occupies 189–407 (WNIGTATIML…KEEGMKMGFK (219 aa)).

This sequence belongs to the radical SAM superfamily. Lipoyl synthase family. It depends on [4Fe-4S] cluster as a cofactor.

The protein localises to the plastid. Its subcellular location is the apicoplast. The catalysed reaction is [[Fe-S] cluster scaffold protein carrying a second [4Fe-4S](2+) cluster] + N(6)-octanoyl-L-lysyl-[protein] + 2 oxidized [2Fe-2S]-[ferredoxin] + 2 S-adenosyl-L-methionine + 4 H(+) = [[Fe-S] cluster scaffold protein] + N(6)-[(R)-dihydrolipoyl]-L-lysyl-[protein] + 4 Fe(3+) + 2 hydrogen sulfide + 2 5'-deoxyadenosine + 2 L-methionine + 2 reduced [2Fe-2S]-[ferredoxin]. The protein operates within protein modification; protein lipoylation via endogenous pathway; protein N(6)-(lipoyl)lysine from octanoyl-[acyl-carrier-protein]: step 2/2. Its function is as follows. Catalyzes the radical-mediated insertion of two sulfur atoms into the C-6 and C-8 positions of the octanoyl moiety bound to the lipoyl domains of lipoate-dependent enzymes, thereby converting the octanoylated domains into lipoylated derivatives. This is Lipoyl synthase, apicoplast from Plasmodium vivax (strain Salvador I).